Reading from the N-terminus, the 475-residue chain is Ribulose bisphosphate carboxylase large chain (475 aa).

Positions 1-2 are excised as a propeptide; sequence MS. An N-acetylproline modification is found at P3. The residue at position 14 (K14) is an N6,N6,N6-trimethyllysine. The substrate site is built by N123 and T173. The active-site Proton acceptor is K175. Residue K177 participates in substrate binding. K201, D203, and E204 together coordinate Mg(2+). Residue K201 is modified to N6-carboxylysine. Residue H294 is the Proton acceptor of the active site. Positions 295, 327, and 379 each coordinate substrate.

It belongs to the RuBisCO large chain family. Type I subfamily. As to quaternary structure, heterohexadecamer of 8 large chains and 8 small chains; disulfide-linked. The disulfide link is formed within the large subunit homodimers. The cofactor is Mg(2+). Post-translationally, the disulfide bond which can form in the large chain dimeric partners within the hexadecamer appears to be associated with oxidative stress and protein turnover.

The protein localises to the plastid. The protein resides in the chloroplast. The enzyme catalyses 2 (2R)-3-phosphoglycerate + 2 H(+) = D-ribulose 1,5-bisphosphate + CO2 + H2O. It carries out the reaction D-ribulose 1,5-bisphosphate + O2 = 2-phosphoglycolate + (2R)-3-phosphoglycerate + 2 H(+). In terms of biological role, ruBisCO catalyzes two reactions: the carboxylation of D-ribulose 1,5-bisphosphate, the primary event in carbon dioxide fixation, as well as the oxidative fragmentation of the pentose substrate in the photorespiration process. Both reactions occur simultaneously and in competition at the same active site. The sequence is that of Ribulose bisphosphate carboxylase large chain (rbcL) from Marchantia polymorpha (Common liverwort).